The primary structure comprises 210 residues: Thymidylate kinase (210 aa).

Residue 10 to 17 (GPEGAGKS) coordinates ATP.

It belongs to the thymidylate kinase family.

The enzyme catalyses dTMP + ATP = dTDP + ADP. Its function is as follows. Phosphorylation of dTMP to form dTDP in both de novo and salvage pathways of dTTP synthesis. The polypeptide is Thymidylate kinase (Pseudomonas fluorescens (strain Pf0-1)).